The following is a 74-amino-acid chain: Translational regulator CsrA (74 aa).

This sequence belongs to the CsrA/RsmA family. Homodimer; the beta-strands of each monomer intercalate to form a hydrophobic core, while the alpha-helices form wings that extend away from the core.

It is found in the cytoplasm. Its function is as follows. A translational regulator that binds mRNA to regulate translation initiation and/or mRNA stability. Usually binds in the 5'-UTR at or near the Shine-Dalgarno sequence preventing ribosome-binding, thus repressing translation. Its main target seems to be the major flagellin gene, while its function is anatagonized by FliW. The polypeptide is Translational regulator CsrA (Bacillus velezensis (strain DSM 23117 / BGSC 10A6 / LMG 26770 / FZB42) (Bacillus amyloliquefaciens subsp. plantarum)).